The following is a 106-amino-acid chain: Translation initiation factor 1A 2 (106 aa).

Positions 1 to 24 (MRKRREGTANNSPTPEVTRVRTPR) are disordered. The region spanning 18-92 (TRVRTPRKEN…SKADVIWKYT (75 aa)) is the S1-like domain.

Belongs to the eIF-1A family.

In terms of biological role, seems to be required for maximal rate of protein biosynthesis. Enhances ribosome dissociation into subunits and stabilizes the binding of the initiator Met-tRNA(I) to 40 S ribosomal subunits. This Methanosarcina mazei (strain ATCC BAA-159 / DSM 3647 / Goe1 / Go1 / JCM 11833 / OCM 88) (Methanosarcina frisia) protein is Translation initiation factor 1A 2 (eIF1A2).